Reading from the N-terminus, the 592-residue chain is Aspartate--tRNA ligase (592 aa).

Glu171 contributes to the L-aspartate binding site. The interval 195 to 198 (QLFK) is aspartate. Arg217 serves as a coordination point for L-aspartate. ATP contacts are provided by residues 217–219 (RDE) and Gln226. Residue His448 participates in L-aspartate binding. Residue Glu482 participates in ATP binding. An L-aspartate-binding site is contributed by Arg489. 534–537 (GLDR) contributes to the ATP binding site.

The protein belongs to the class-II aminoacyl-tRNA synthetase family. Type 1 subfamily. In terms of assembly, homodimer.

The protein localises to the cytoplasm. The enzyme catalyses tRNA(Asp) + L-aspartate + ATP = L-aspartyl-tRNA(Asp) + AMP + diphosphate. Catalyzes the attachment of L-aspartate to tRNA(Asp) in a two-step reaction: L-aspartate is first activated by ATP to form Asp-AMP and then transferred to the acceptor end of tRNA(Asp). The chain is Aspartate--tRNA ligase from Vibrio vulnificus (strain CMCP6).